The chain runs to 349 residues: sn-glycerol-3-phosphate import ATP-binding protein UgpC (349 aa).

An ABC transporter domain is found at 4-234 (ISLRDVRKSY…PATTFVAGFI (231 aa)). 36 to 43 (GPSGCGKS) provides a ligand contact to ATP.

It belongs to the ABC transporter superfamily. sn-glycerol-3-phosphate importer (TC 3.A.1.1.3) family. As to quaternary structure, the complex is composed of two ATP-binding proteins (UgpC), two transmembrane proteins (UgpA and UgpE) and a solute-binding protein (UgpB).

The protein resides in the cell inner membrane. It catalyses the reaction sn-glycerol 3-phosphate(out) + ATP + H2O = sn-glycerol 3-phosphate(in) + ADP + phosphate + H(+). In terms of biological role, part of the ABC transporter complex UgpBAEC involved in sn-glycerol-3-phosphate (G3P) import. Responsible for energy coupling to the transport system. The sequence is that of sn-glycerol-3-phosphate import ATP-binding protein UgpC from Cereibacter sphaeroides (strain ATCC 17023 / DSM 158 / JCM 6121 / CCUG 31486 / LMG 2827 / NBRC 12203 / NCIMB 8253 / ATH 2.4.1.) (Rhodobacter sphaeroides).